A 346-amino-acid polypeptide reads, in one-letter code: MTEDQLLGPRAHGEPCGSAVLKAVAEDFQVEEVLDIPLSGEGEHLWLWVEKRNLNTEEAAKRIARAAGVPLKLISYAGLKDRQALTRQWFSLHLPGKADPDLAAAEDDSLRLLQRVRHQRKLQRGAHSANGFRLRLTDLHADHAQLDARLERIRAQGVPNYFGLQRFGYEGGNLLGARDFAARAELPVQRNLRSRLLSAGRSYLFNRVLAQRVADGSWAEARVGDLLAFTDSRSFFPAAEAECSDPRLAILDLHPTGPLWGEGGSPAGAEIQALEDAVAASEEPIANWLAQAGMKHERRILRLPIGGLSWHYPGPDILQLEFVLPTGCFATAMVRELVSLAGQTDI.

Asp81 acts as the Nucleophile in catalysis. The TRUD domain maps to 157-303 (GVPNYFGLQR…MKHERRILRL (147 aa)).

It belongs to the pseudouridine synthase TruD family.

It catalyses the reaction uridine(13) in tRNA = pseudouridine(13) in tRNA. Its function is as follows. Responsible for synthesis of pseudouridine from uracil-13 in transfer RNAs. This Stutzerimonas stutzeri (strain A1501) (Pseudomonas stutzeri) protein is tRNA pseudouridine synthase D.